A 119-amino-acid chain; its full sequence is Ribosome-binding factor A (119 aa).

The protein belongs to the RbfA family. In terms of assembly, monomer. Binds 30S ribosomal subunits, but not 50S ribosomal subunits or 70S ribosomes.

The protein resides in the cytoplasm. One of several proteins that assist in the late maturation steps of the functional core of the 30S ribosomal subunit. Associates with free 30S ribosomal subunits (but not with 30S subunits that are part of 70S ribosomes or polysomes). Required for efficient processing of 16S rRNA. May interact with the 5'-terminal helix region of 16S rRNA. This is Ribosome-binding factor A from Geobacter sp. (strain M21).